The chain runs to 398 residues: tRNA-specific 2-thiouridylase MnmA (398 aa).

ATP-binding positions include 19–26 (AMSGGVDS) and L45. C113 acts as the Nucleophile in catalysis. A disulfide bridge connects residues C113 and C210. Residue G137 coordinates ATP. The tract at residues 160–162 (RDQ) is interaction with tRNA. C210 acts as the Cysteine persulfide intermediate in catalysis.

Belongs to the MnmA/TRMU family.

Its subcellular location is the cytoplasm. It carries out the reaction S-sulfanyl-L-cysteinyl-[protein] + uridine(34) in tRNA + AH2 + ATP = 2-thiouridine(34) in tRNA + L-cysteinyl-[protein] + A + AMP + diphosphate + H(+). Catalyzes the 2-thiolation of uridine at the wobble position (U34) of tRNA, leading to the formation of s(2)U34. This Rhodopseudomonas palustris (strain HaA2) protein is tRNA-specific 2-thiouridylase MnmA.